A 305-amino-acid chain; its full sequence is Tyrosine recombinase XerD (305 aa).

In terms of domain architecture, Core-binding (CB) spans 2–87 (SQGEAWADAF…AVRQFYRFVL (86 aa)). The Tyr recombinase domain occupies 108–295 (PLPKVLERDE…AGEHLAHIVQ (188 aa)). Catalysis depends on residues R149, K173, H247, R250, and H273. The O-(3'-phospho-DNA)-tyrosine intermediate role is filled by Y282.

This sequence belongs to the 'phage' integrase family. XerD subfamily. As to quaternary structure, forms a cyclic heterotetrameric complex composed of two molecules of XerC and two molecules of XerD.

The protein localises to the cytoplasm. Its function is as follows. Site-specific tyrosine recombinase, which acts by catalyzing the cutting and rejoining of the recombining DNA molecules. The XerC-XerD complex is essential to convert dimers of the bacterial chromosome into monomers to permit their segregation at cell division. It also contributes to the segregational stability of plasmids. The protein is Tyrosine recombinase XerD of Caulobacter vibrioides (strain ATCC 19089 / CIP 103742 / CB 15) (Caulobacter crescentus).